A 394-amino-acid chain; its full sequence is DNA repair protein brc-2 (394 aa).

Residues 1–12 (MGDSSKKVKDSF) show a composition bias toward basic and acidic residues. 2 disordered regions span residues 1-30 (MGDSSKKVKDSFDTISEPDSFDEPKGVPIS) and 56-136 (MLNS…EKKK). Residues 1–60 (MGDSSKKVKDSFDTISEPDSFDEPKGVPISMEPVFSTAAGIRIDVKQESIDKSKKMLNSD) are interaction with rad-51. Residues 28-62 (PISMEPVFSTAAGIRIDVKQESIDKSKKMLNSDLK) form a BRCA2 repeat-like region region. The segment covering 56 to 73 (MLNSDLKSKSSSKGGFSS) has biased composition (low complexity). Residues 60–89 (DLKSKSSSKGGFSSPLVRKNNGSSAFVSPF) are interaction with rad-51-DNA complexes. The span at 124–134 (KKSKKHSKKEK) shows a compositional bias: basic residues. Residues 371–389 (WKDFGSYLKHKEDKKKRRS) are required for ssDNA binding.

As to quaternary structure, interacts (via N-terminus) with rad-51; regulates rad-51 recruitment to sites of DNA double strand breaks. Expressed in the germline, with highest expression in cells undergoing oogenesis.

The protein localises to the nucleus. It localises to the chromosome. In terms of biological role, required for the homologous recombination repair of DNA double strand breaks, thereby playing a role in chromosome integrity. Acts by targeting rad-51 to sites of DNA damage and stabilizing rad-51-DNA filaments by blocking ATP hydrolysis catalyzed by rad-51. Promotes rad-51 mediated displacement-loop (D-loop) formation during strand invasion between the invading single-stranded DNA (ssDNA) and the homologous duplex DNA. Also functions independently of rad-51 in DNA double-strand break (DSB) repair by promoting DNA single-strand annealing (SSA) when the homologous recombination (HR) and non-homologous end joining (NHEJ) pathways are compromised. Binds selectively to single-stranded (ssDNA) via its C-terminus. Involved in telomere maintenance and replicative senescence. This Caenorhabditis elegans protein is DNA repair protein brc-2.